We begin with the raw amino-acid sequence, 145 residues long: Putative pre-16S rRNA nuclease (145 aa).

Belongs to the YqgF nuclease family.

It is found in the cytoplasm. Its function is as follows. Could be a nuclease involved in processing of the 5'-end of pre-16S rRNA. The chain is Putative pre-16S rRNA nuclease from Opitutus terrae (strain DSM 11246 / JCM 15787 / PB90-1).